The chain runs to 60 residues: MGNIRTTFVKRTAKELLELHGDKFNSDFENNKQVVAEYSTVSTKHLRNQIAGYATHLLEQ.

Belongs to the eukaryotic ribosomal protein eS17 family.

This chain is Small ribosomal subunit protein eS17, found in Methanosphaera stadtmanae (strain ATCC 43021 / DSM 3091 / JCM 11832 / MCB-3).